Consider the following 162-residue polypeptide: B-box zinc finger protein 23 (162 aa).

Zn(2+) is bound by residues C5, C8, C28, H33, C63, C66, C86, and H91. Residues 5–47 form a B box-type 1; atypical zinc finger; sequence CEVCEKAEAEVLCCSDEAVLCKPCDIKVHEANKLFQRHHRVAL. Residues 63 to 101 form a B box-type 2; atypical zinc finger; the sequence is CDICQERKGYFFCLEDRAMLCNDCDEAIHTCNSHQRFLL. The segment at 137-162 is disordered; the sequence is QYSSEETEAGNSGEIVHKNPSVILSP.

Its subcellular location is the nucleus. Probable transcription factor that may be involved in seedling photomorphogenesis. In Arabidopsis thaliana (Mouse-ear cress), this protein is B-box zinc finger protein 23.